The chain runs to 452 residues: Adenylosuccinate synthetase isozyme 1 (452 aa).

Residues Met1–Tyr22 are disordered. Residues Gly37–Lys43 and Gly65–Thr67 each bind GTP. The active-site Proton acceptor is the Asp38. The Mg(2+) site is built by Asp38 and Gly65. Asp38 provides a ligand contact to substrate. Residues Asp38–Lys41, Asn63–His66, Thr158, Arg172, Asn251, Thr266, and Arg330 each bind IMP. His66 acts as the Proton donor in catalysis. Val326 to Arg332 contacts substrate. Residues Arg332, Lys358–Asp360, and Gly440–Lys443 each bind GTP.

Belongs to the adenylosuccinate synthetase family. Homodimer. Mg(2+) serves as cofactor.

The protein localises to the cytoplasm. The catalysed reaction is IMP + L-aspartate + GTP = N(6)-(1,2-dicarboxyethyl)-AMP + GDP + phosphate + 2 H(+). It participates in purine metabolism; AMP biosynthesis via de novo pathway; AMP from IMP: step 1/2. Functionally, component of the purine nucleotide cycle (PNC), which interconverts IMP and AMP to regulate the nucleotide levels in various tissues, and which contributes to glycolysis and ammoniagenesis. Catalyzes the first committed step in the biosynthesis of AMP from IMP. This is Adenylosuccinate synthetase isozyme 1 (adss1) from Xenopus tropicalis (Western clawed frog).